Here is a 324-residue protein sequence, read N- to C-terminus: Polyketide biosynthesis acyltransferase homolog BaeD (324 aa).

S99 is an active-site residue.

Its subcellular location is the cytoplasm. It functions in the pathway antibiotic biosynthesis; bacillaene biosynthesis. In terms of biological role, probably involved in some intermediate steps for the synthesis of the antibiotic polyketide bacillaene which is involved in secondary metabolism. This chain is Polyketide biosynthesis acyltransferase homolog BaeD (baeD), found in Bacillus velezensis (strain DSM 23117 / BGSC 10A6 / LMG 26770 / FZB42) (Bacillus amyloliquefaciens subsp. plantarum).